We begin with the raw amino-acid sequence, 235 residues long: Orotidine 5'-phosphate decarboxylase (235 aa).

Residues D10, K33, 60–69 (DLKMSDIPNT), T123, R185, Q194, G214, and R215 contribute to the substrate site. Residue K62 is the Proton donor of the active site.

It belongs to the OMP decarboxylase family. Type 1 subfamily. In terms of assembly, homodimer.

The enzyme catalyses orotidine 5'-phosphate + H(+) = UMP + CO2. Its pathway is pyrimidine metabolism; UMP biosynthesis via de novo pathway; UMP from orotate: step 2/2. Functionally, catalyzes the decarboxylation of orotidine 5'-monophosphate (OMP) to uridine 5'-monophosphate (UMP). The chain is Orotidine 5'-phosphate decarboxylase from Lactobacillus gasseri (strain ATCC 33323 / DSM 20243 / BCRC 14619 / CIP 102991 / JCM 1131 / KCTC 3163 / NCIMB 11718 / NCTC 13722 / AM63).